The following is a 323-amino-acid chain: MQTNWQPTASIEQLRQRATLIAAIRQFFAERQVMEVDTPAMSHATVTDIHLHTFQTEFVGPGYADGSKLFFMTSPEFHMKRLLAAGSGCIYQINKAFRNEENGRYHNPEFTMLEWYRVGFDHHKLMDEMDDLLQLVLKCGAAQRMTYQQAFIDVLGVCPLEGSMTELKAAASKLGLSDIAEPEEDRDTLLQLLFSVGVENKIGQDVPAFVYDFPASQAALAKINPQDHRVADRFEVYFKGIELANGFHELDNPKEQLARFEQDNAKRIEMGLKPQPIDYHLISALEAGLPDCAGVALGIDRLIMLALGCDHIDQVTAFPFPIA.

Residue 74–76 (SPE) coordinates substrate. Residues 98 to 100 (RNE) and N107 each bind ATP. Substrate is bound at residue Y116. Residue 242–243 (EL) coordinates ATP. E249 serves as a coordination point for substrate. G298 is an ATP binding site.

This sequence belongs to the class-II aminoacyl-tRNA synthetase family. EpmA subfamily. As to quaternary structure, homodimer.

The enzyme catalyses D-beta-lysine + L-lysyl-[protein] + ATP = N(6)-((3R)-3,6-diaminohexanoyl)-L-lysyl-[protein] + AMP + diphosphate + H(+). Its function is as follows. With EpmB is involved in the beta-lysylation step of the post-translational modification of translation elongation factor P (EF-P). Catalyzes the ATP-dependent activation of (R)-beta-lysine produced by EpmB, forming a lysyl-adenylate, from which the beta-lysyl moiety is then transferred to the epsilon-amino group of a conserved specific lysine residue in EF-P. In Vibrio parahaemolyticus serotype O3:K6 (strain RIMD 2210633), this protein is Elongation factor P--(R)-beta-lysine ligase.